Consider the following 501-residue polypeptide: G protein-activated inward rectifier potassium channel 1 (501 aa).

The tract at residues 1–40 (MSALRRKFGDDYQVVTTSSSGSGLQPQGPGQGPQQQLVPK) is disordered. At 1–80 (MSALRRKFGD…LFTTLVDLKW (80 aa)) the chain is on the cytoplasmic side. Low complexity predominate over residues 18 to 37 (SSSGSGLQPQGPGQGPQQQL). A helical membrane pass occupies residues 81–105 (RWNLFIFILTYTVAWLFMASMWWVI). Over 106–129 (AYTRGDLNKAHVGNYTPCVANVYN) the chain is Extracellular. N119 carries N-linked (GlcNAc...) asparagine glycosylation. Positions 130-141 (FPSAFLFFIETE) form an intramembrane region, helical; Pore-forming. An intramembrane region (pore-forming) is located at residues 142-148 (ATIGYGY). Positions 143 to 148 (TIGYGY) match the Selectivity filter motif. At 149-157 (RYITDKCPE) the chain is on the extracellular side. A helical transmembrane segment spans residues 158 to 179 (GIILFLFQSILGSIVDAFLIGC). Residues 180–501 (MFIKMSQPKK…LRKMNSDRFT (322 aa)) are Cytoplasmic-facing. The segment at 182 to 209 (IKMSQPKKRAETLMFSEHAVISMRDGKL) is polyphosphoinositide (PIP2)-binding. A phosphoserine mark is found at S385 and S424. Polar residues predominate over residues 456–467 (TKMLSDPMSQSV). Residues 456–501 (TKMLSDPMSQSVADLPPKLQKMAGGPTRMEGNLPAKLRKMNSDRFT) are disordered.

This sequence belongs to the inward rectifier-type potassium channel (TC 1.A.2.1) family. KCNJ3 subfamily. As to quaternary structure, associates with KCNJ5/GIRK4 or KCNJ6/GIRK2 to form a G-protein activated heteromultimer pore-forming unit. The resulting inward current is much larger. Associates with KCNJ9/GIRK3 to form a G-protein activated heteromultimer pore-forming unit.

The protein resides in the membrane. It catalyses the reaction K(+)(in) = K(+)(out). Heteromultimer composed of KCNJ3/GIRK1 and KCNJ5/GIRK4 is activated by phosphatidylinositol 4,5 biphosphate (PtdIns(4,5)P2). In terms of biological role, inward rectifier potassium channels are characterized by a greater tendency to allow potassium to flow into the cell rather than out of it. Their voltage dependence is regulated by the concentration of extracellular potassium; as external potassium is raised, the voltage range of the channel opening shifts to more positive voltages. The inward rectification is mainly due to the blockage of outward current by internal magnesium. This potassium channel is controlled by G proteins. This receptor plays a crucial role in regulating the heartbeat. Forms a functional channel in association with KCNJ9/GIRK3. The chain is G protein-activated inward rectifier potassium channel 1 (Kcnj3) from Rattus norvegicus (Rat).